The sequence spans 273 residues: Dermonecrotic toxin LsaSicTox-alphaIB1aiii (273 aa).

The active site involves His-5. Residues Glu-25 and Asp-27 each contribute to the Mg(2+) site. His-41 serves as the catalytic Nucleophile. 2 disulfide bridges follow: Cys-45–Cys-51 and Cys-47–Cys-190. Asp-85 provides a ligand contact to Mg(2+).

The protein belongs to the arthropod phospholipase D family. Class II subfamily. Mg(2+) serves as cofactor. Expressed by the venom gland.

The protein resides in the secreted. The catalysed reaction is an N-(acyl)-sphingosylphosphocholine = an N-(acyl)-sphingosyl-1,3-cyclic phosphate + choline. The enzyme catalyses an N-(acyl)-sphingosylphosphoethanolamine = an N-(acyl)-sphingosyl-1,3-cyclic phosphate + ethanolamine. It catalyses the reaction a 1-acyl-sn-glycero-3-phosphocholine = a 1-acyl-sn-glycero-2,3-cyclic phosphate + choline. It carries out the reaction a 1-acyl-sn-glycero-3-phosphoethanolamine = a 1-acyl-sn-glycero-2,3-cyclic phosphate + ethanolamine. Dermonecrotic toxins cleave the phosphodiester linkage between the phosphate and headgroup of certain phospholipids (sphingolipid and lysolipid substrates), forming an alcohol (often choline) and a cyclic phosphate. This toxin acts on sphingomyelin (SM). It may also act on ceramide phosphoethanolamine (CPE), lysophosphatidylcholine (LPC) and lysophosphatidylethanolamine (LPE), but not on lysophosphatidylserine (LPS), and lysophosphatidylglycerol (LPG). It acts by transphosphatidylation, releasing exclusively cyclic phosphate products as second products. Induces dermonecrosis, hemolysis, increased vascular permeability, edema, inflammatory response, and platelet aggregation. This chain is Dermonecrotic toxin LsaSicTox-alphaIB1aiii, found in Loxosceles sabina (Tucson recluse spider).